Consider the following 332-residue polypeptide: Probable ABC transporter permease protein YphD (332 aa).

10 helical membrane-spanning segments follow: residues 28–48, 63–83, 84–104, 105–125, 131–151, 172–192, 222–242, 251–271, 278–298, and 303–323; these read GLLV…PGFI, IGIA…DVSV, GPMV…EVPL, AVAC…AGVL, VPSF…GLFM, FLGV…FVFI, VRIL…ILLA, GAAN…GTAL, LFGT…LVLL, and FFQQ…NILL.

This sequence belongs to the binding-protein-dependent transport system permease family. AraH/RbsC subfamily.

It localises to the cell inner membrane. Probably part of the binding-protein-dependent transport system YphDEF. Probably responsible for the translocation of the substrate across the membrane. The sequence is that of Probable ABC transporter permease protein YphD (yphD) from Escherichia coli (strain K12).